The chain runs to 232 residues: Ribose-5-phosphate isomerase A (232 aa).

Substrate contacts are provided by residues 29–32 (SGST), 86–89 (DGAD), and 99–102 (KGGG). Catalysis depends on E108, which acts as the Proton acceptor. K126 serves as a coordination point for substrate.

The protein belongs to the ribose 5-phosphate isomerase family. In terms of assembly, homodimer.

It carries out the reaction aldehydo-D-ribose 5-phosphate = D-ribulose 5-phosphate. It participates in carbohydrate degradation; pentose phosphate pathway; D-ribose 5-phosphate from D-ribulose 5-phosphate (non-oxidative stage): step 1/1. Functionally, catalyzes the reversible conversion of ribose-5-phosphate to ribulose 5-phosphate. The sequence is that of Ribose-5-phosphate isomerase A from Synechococcus sp. (strain ATCC 27144 / PCC 6301 / SAUG 1402/1) (Anacystis nidulans).